The following is a 170-amino-acid chain: Urease accessory protein UreE (170 aa).

It belongs to the UreE family.

Its subcellular location is the cytoplasm. Its function is as follows. Involved in urease metallocenter assembly. Binds nickel. Probably functions as a nickel donor during metallocenter assembly. The sequence is that of Urease accessory protein UreE from Helicobacter pylori (strain J99 / ATCC 700824) (Campylobacter pylori J99).